The sequence spans 565 residues: Urocanate hydratase (565 aa).

Residues 61–62 (GG), Gln139, 185–187 (GMG), Glu205, Arg210, 251–252 (NA), 272–276 (QTSAH), 282–283 (YL), and Tyr331 contribute to the NAD(+) site. Cys419 is a catalytic residue. Residues 453 to 472 (LDSGSVSSPNRETESMKDGS) are disordered. The span at 463 to 472 (RETESMKDGS) shows a compositional bias: basic and acidic residues. Gly501 provides a ligand contact to NAD(+).

This sequence belongs to the urocanase family. It depends on NAD(+) as a cofactor.

The protein localises to the cytoplasm. It catalyses the reaction 4-imidazolone-5-propanoate = trans-urocanate + H2O. It functions in the pathway amino-acid degradation; L-histidine degradation into L-glutamate; N-formimidoyl-L-glutamate from L-histidine: step 2/3. Its function is as follows. Catalyzes the conversion of urocanate to 4-imidazolone-5-propionate. The polypeptide is Urocanate hydratase (Pseudomonas syringae).